The chain runs to 189 residues: Crossover junction endodeoxyribonuclease RuvC (189 aa).

Active-site residues include Asp7, Glu68, and Asp141. The Mg(2+) site is built by Asp7, Glu68, and Asp141.

The protein belongs to the RuvC family. As to quaternary structure, homodimer which binds Holliday junction (HJ) DNA. The HJ becomes 2-fold symmetrical on binding to RuvC with unstacked arms; it has a different conformation from HJ DNA in complex with RuvA. In the full resolvosome a probable DNA-RuvA(4)-RuvB(12)-RuvC(2) complex forms which resolves the HJ. The cofactor is Mg(2+).

The protein localises to the cytoplasm. The enzyme catalyses Endonucleolytic cleavage at a junction such as a reciprocal single-stranded crossover between two homologous DNA duplexes (Holliday junction).. Its function is as follows. The RuvA-RuvB-RuvC complex processes Holliday junction (HJ) DNA during genetic recombination and DNA repair. Endonuclease that resolves HJ intermediates. Cleaves cruciform DNA by making single-stranded nicks across the HJ at symmetrical positions within the homologous arms, yielding a 5'-phosphate and a 3'-hydroxyl group; requires a central core of homology in the junction. The consensus cleavage sequence is 5'-(A/T)TT(C/G)-3'. Cleavage occurs on the 3'-side of the TT dinucleotide at the point of strand exchange. HJ branch migration catalyzed by RuvA-RuvB allows RuvC to scan DNA until it finds its consensus sequence, where it cleaves and resolves the cruciform DNA. This is Crossover junction endodeoxyribonuclease RuvC from Rhodococcus opacus (strain B4).